The chain runs to 959 residues: Translation initiation factor IF-2 (959 aa).

Basic and acidic residues predominate over residues 1–10 (MSDKTNDDKT). Residues 1–374 (MSDKTNDDKT…SQMQETREKI (374 aa)) form a disordered region. Polar residues predominate over residues 27–37 (EQSTVRQNFSH). Composition is skewed to low complexity over residues 63–118 (AAAA…VTKP) and 128–138 (QRPGGQQAQRP). Basic and acidic residues-rich tracts occupy residues 154 to 225 (SEMD…EAAK) and 232 to 241 (ARSERRDDAR). Residues 246–284 (GARPQQAGRPQGGRPQPAGRPQQGSPRPAPIIADAAPIA) are compositionally biased toward low complexity. Over residues 318–333 (PEVRAPKVVKGEDDRR) the composition is skewed to basic and acidic residues. Residues 457–626 (SRPPVVTIMG…LLQAEMLDLK (170 aa)) form the tr-type G domain. The interval 466-473 (GHVDHGKT) is G1. 466 to 473 (GHVDHGKT) serves as a coordination point for GTP. Residues 491-495 (GITQH) are G2. The tract at residues 512-515 (DTPG) is G3. GTP is bound by residues 512 to 516 (DTPGH) and 566 to 569 (NKID). The tract at residues 566–569 (NKID) is G4. Residues 602–604 (SAK) are G5.

This sequence belongs to the TRAFAC class translation factor GTPase superfamily. Classic translation factor GTPase family. IF-2 subfamily.

It localises to the cytoplasm. One of the essential components for the initiation of protein synthesis. Protects formylmethionyl-tRNA from spontaneous hydrolysis and promotes its binding to the 30S ribosomal subunits. Also involved in the hydrolysis of GTP during the formation of the 70S ribosomal complex. The protein is Translation initiation factor IF-2 of Brucella canis (strain ATCC 23365 / NCTC 10854 / RM-666).